The primary structure comprises 1013 residues: GTPase-activating protein BEM3 (1013 aa).

4 disordered regions span residues 90-197 (TVVE…GSPA), 258-277 (GSRYDTERAGGPGPLSPESI), 282-301 (SDLQEHQPSDLSSTTRTDLG), and 307-421 (VDTT…HQSK). A compositionally biased stretch (polar residues) spans 143–160 (QEATSGAQQVPLLTSSKS). 3 stretches are compositionally biased toward polar residues: residues 309 to 319 (TTFNAEDNPTG), 333 to 388 (TLQN…TSSN), and 404 to 418 (KSYSQHSGSPHSNSH). The PH domain occupies 555-662 (EFAKEGMLLV…WISVLTTLCD (108 aa)). A disordered region spans residues 702–726 (AMDATSPTRPNDPNPVSLTSEEEKE). The span at 706–720 (TSPTRPNDPNPVSLT) shows a compositional bias: polar residues. In terms of domain architecture, Rho-GAP spans 799-1013 (LQLSSHPYQG…PPVNIHIPQI (215 aa)).

Its subcellular location is the cytoplasm. Its function is as follows. GTPase-activating protein (GAP) for CDC42 and less efficiently for RHO1. Negative regulator of the pheromone-response pathway through the STE20 protein kinase. The chain is GTPase-activating protein BEM3 (BEM3) from Eremothecium gossypii (strain ATCC 10895 / CBS 109.51 / FGSC 9923 / NRRL Y-1056) (Yeast).